Consider the following 150-residue polypeptide: Ribosome maturation factor RimP (150 aa).

This sequence belongs to the RimP family.

It is found in the cytoplasm. Required for maturation of 30S ribosomal subunits. The polypeptide is Ribosome maturation factor RimP (Escherichia coli O9:H4 (strain HS)).